Consider the following 275-residue polypeptide: NH(3)-dependent NAD(+) synthetase (275 aa).

50-57 (GISGGVDS) lines the ATP pocket. Aspartate 56 contributes to the Mg(2+) binding site. Arginine 147 lines the deamido-NAD(+) pocket. Residue threonine 167 participates in ATP binding. Glutamate 172 lines the Mg(2+) pocket. Deamido-NAD(+)-binding residues include lysine 180 and aspartate 187. Residues lysine 196 and threonine 218 each coordinate ATP. 267-268 (HK) serves as a coordination point for deamido-NAD(+).

Belongs to the NAD synthetase family. As to quaternary structure, homodimer.

It catalyses the reaction deamido-NAD(+) + NH4(+) + ATP = AMP + diphosphate + NAD(+) + H(+). Its pathway is cofactor biosynthesis; NAD(+) biosynthesis; NAD(+) from deamido-NAD(+) (ammonia route): step 1/1. Functionally, catalyzes the ATP-dependent amidation of deamido-NAD to form NAD. Uses ammonia as a nitrogen source. The polypeptide is NH(3)-dependent NAD(+) synthetase (Pseudomonas aeruginosa (strain UCBPP-PA14)).